The primary structure comprises 261 residues: MLFLLSPAKSLDYDTPVPTEVPATQPHFEAPRGPSAELIKLLREKSPQQISELMHLSEKLSALNVARYQAWSGKGTPKNARQAAFAFDGDVYGGLDARSLTPTQLAWAQEHVCILSGLYGLLRPLDLLQPYRLEMGTPLANRHGKDLYAFWGARIAEHLNQRLAADRTPVVVNVASQEYFRSVDRKALKARVVECVFEEWKGDRYKIVSFYAKRARGLLARWAVLHKAATPKALEKFDLEGYGFDATASTAERLVFRRKFG.

The protein belongs to the UPF0246 family.

This chain is UPF0246 protein Vapar_1301, found in Variovorax paradoxus (strain S110).